We begin with the raw amino-acid sequence, 1236 residues long: Structural polyprotein (1236 aa).

Residues 1–36 (MFPYPQLNFPPVYPTNPMAYRDPNPPRCRWRPFRPP) form a necessary for nucleocapsid assembly and virus assembly region. The interval 37–70 (LAAQIEDLRRSIANLTFKQRSPNPPPGPPPKKKK) is host transcription inhibition. A Supraphysiological nuclear export signal motif is present at residues 44–51 (LRRSIANL). The tract at residues 44–103 (LRRSIANLTFKQRSPNPPPGPPPKKKKSAPKPKPTQPKKKKQQAKKTKRKPKPGKRQRMC) is disordered. Residues 66–102 (PKKKKSAPKPKPTQPKKKKQQAKKTKRKPKPGKRQRM) are compositionally biased toward basic residues. A Nuclear localization signal motif is present at residues 67 to 70 (KKKK). The tract at residues 83–111 (KKQQAKKTKRKPKPGKRQRMCMKLESDKT) is binding to the viral RNA. The interval 96–110 (PGKRQRMCMKLESDK) is ribosome-binding. Ser-108 carries the phosphoserine modification. In terms of domain architecture, Peptidase S3 spans 110–259 (KTFPIMLNGQ…KDTPEGSEPW (150 aa)). Thr-111 carries the phosphothreonine modification. Residue His-136 is the Charge relay system of the active site. Positions 152–157 (KKASMY) are interaction with spike glycoprotein E2. Active-site charge relay system residues include Asp-158 and Ser-210. The interval 244–248 (QKGVT) is interaction with spike glycoprotein E2. The tract at residues 260 to 271 (SLVTALCVLSNV) is functions as an uncleaved signal peptide for the precursor of protein E3/E2. At 260–687 (SLVTALCVLS…YYHRHPVYTV (428 aa)) the chain is on the extracellular side. 7 disulfides stabilise this stretch: Cys-266–Cys-275, Cys-335–Cys-443, Cys-338–Cys-344, Cys-410–Cys-424, Cys-471–Cys-585, Cys-520–Cys-545, and Cys-522–Cys-539. An N-linked (GlcNAc...) asparagine; by host glycan is attached at Asn-270. The N-linked (GlcNAc...) asparagine; by host glycan is linked to Asn-515. Residue Asn-637 is glycosylated (N-linked (GlcNAc...) asparagine; by host). The helical transmembrane segment at 688–708 (IVLCGVALAILVGTASSAACI) threads the bilayer. Over 709–742 (AKARRDCLTPYALAPNATVPTALAVLCCIRPTNA) the chain is Cytoplasmic. The interaction with the capsid protein stretch occupies residues 710-714 (KARRD). 3 S-palmitoyl cysteine; by host lipidation sites follow: Cys-715, Cys-735, and Cys-736. Cys-715 and Cys-736 form a disulfide bridge. Residues 717-737 (TPYALAPNATVPTALAVLCCI) form a transient transmembrane before p62-6K protein processing region. Residues 743-767 (ETFGETLNHLWFNNQPFLWAQLCIP) are Extracellular-facing. The next 2 helical transmembrane spans lie at 768-788 (LAAL…LLVA) and 789-809 (GVCL…NVPG). Over 810-1205 (IPYKALVERA…QAAVSKTSWN (396 aa)) the chain is Extracellular. Intrachain disulfides connect Cys-846/Cys-911, Cys-859/Cys-891, Cys-860/Cys-893, and Cys-865/Cys-875. The E1 fusion peptide loop stretch occupies residues 881–898 (VYPFMWGGAQCFCDSENT). 3 N-linked (GlcNAc...) asparagine; by host glycosylation sites follow: Asn-936, Asn-1042, and Asn-1067. Intrachain disulfides connect Cys-1056–Cys-1068, Cys-1098–Cys-1173, Cys-1103–Cys-1177, and Cys-1125–Cys-1167. Residues 1206-1226 (WLLALFGGASSLIVVGLIVLV) form a helical membrane-spanning segment. The Cytoplasmic segment spans residues 1227–1236 (CSSMLINTRR).

In terms of assembly, homodimer. Homomultimer. Interacts with host karyopherin KPNA4; this interaction allows the nuclear import of the viral capsid protein. Interacts with spike glycoprotein E2. Interacts with host IRAK1; the interaction leads to inhibition of IRAK1-dependent signaling. Part of a tetrameric complex composed of host CRM1, host importin alpha/beta dimer and the viral capsid; this complex blocks the receptor-mediated transport through the nuclear pore. Interacts with host phosphatase PPP1CA; this interaction dephosphorylates the capsid protein, which increases its ability to bind to the viral genome. As to quaternary structure, the precursor of protein E3/E2 and E1 form a heterodimer shortly after synthesis. Interacts with spike glycoprotein E2. The precursor of protein E3/E2 and E1 form a heterodimer shortly after synthesis. Processing of the precursor of protein E3/E2 into E2 and E3 results in a heterodimer of the spike glycoproteins E2 and E1. Spike at virion surface are constituted of three E2-E1 heterodimers. After target cell attachment and endocytosis, E1 change conformation to form homotrimers. Interacts with 6K protein. In terms of assembly, interacts with spike glycoprotein E1. Processing of the precursor of protein E3/E2 into E2 and E3 results in a heterodimer of the spike glycoproteins E2 and E1. Spike at virion surface are constituted of a trimer of E2-E1 heterodimers. Interacts with 6K protein. The E2-E1 heterodimer interacts with host PCDH10 (via domain Cadherin 1); this interaction mediates viral entry to the host cell. As to quaternary structure, oligomer. Interacts with spike glycoprotein E1. Interacts with spike glycoprotein E2. Structural polyprotein: Specific enzymatic cleavages in vivo yield mature proteins. Capsid protein is auto-cleaved during polyprotein translation, unmasking a signal peptide at the N-terminus of the precursor of E3/E2. The remaining polyprotein is then targeted to the host endoplasmic reticulum, where host signal peptidase cleaves it into pE2, 6K and E1 proteins. pE2 is further processed to mature E3 and E2 by host furin in trans-Golgi vesicle. In terms of processing, phosphorylated on serine and threonine residues. Post-translationally, palmitoylated via thioester bonds. These palmitoylations may induce disruption of the C-terminus transmembrane. This would result in the reorientation of E2 C-terminus from lumenal to cytoplasmic side. N-glycosylated. In terms of processing, palmitoylated via thioester bonds.

It localises to the virion. The protein localises to the host cytoplasm. It is found in the host cell membrane. The protein resides in the host nucleus. Its subcellular location is the virion membrane. It localises to the host Golgi apparatus. The protein localises to the host trans-Golgi network. It is found in the host endoplasmic reticulum. The catalysed reaction is Autocatalytic release of the core protein from the N-terminus of the togavirus structural polyprotein by hydrolysis of a -Trp-|-Ser- bond.. Its function is as follows. Forms an icosahedral capsid with a T=4 symmetry composed of 240 copies of the capsid protein surrounded by a lipid membrane through which penetrate 80 spikes composed of trimers of E1-E2 heterodimers. The capsid protein binds to the viral RNA genome at a site adjacent to a ribosome binding site for viral genome translation following genome release. Possesses a protease activity that results in its autocatalytic cleavage from the nascent structural protein. Following its self-cleavage, the capsid protein transiently associates with ribosomes, and within several minutes the protein binds to viral RNA and rapidly assembles into icosahedric core particles. The resulting nucleocapsid eventually associates with the cytoplasmic domain of the spike glycoprotein E2 at the cell membrane, leading to budding and formation of mature virions. In case of infection, new virions attach to target cells and after clathrin-mediated endocytosis their membrane fuses with the host endosomal membrane. This leads to the release of the nucleocapsid into the cytoplasm, followed by an uncoating event necessary for the genomic RNA to become accessible. The uncoating might be triggered by the interaction of capsid proteins with ribosomes. Binding of ribosomes would release the genomic RNA since the same region is genomic RNA-binding and ribosome-binding. Specifically inhibits interleukin-1 receptor-associated kinase 1/IRAK1-dependent signaling during viral entry, representing a means by which the alphaviruses may evade innate immune detection and activation prior to viral gene expression. Inhibits host transcription. Forms a tetrameric complex with XPO1/CRM1 and the nuclear import receptor importin. This complex blocks the central channel of host nuclear pores thereby inhibiting the receptor-mediated nuclear transport and thus the host mRNA and rRNA transcription. The inhibition of transcription is linked to a cytopathic effect on the host cell. Functionally, provides the signal sequence for the translocation of the precursor of protein E3/E2 to the host endoplasmic reticulum. Furin-cleaved E3 remains associated with spike glycoprotein E1 and mediates pH protection of the latter during the transport via the secretory pathway. After virion release from the host cell, the assembly protein E3 is gradually released in the extracellular space. In terms of biological role, plays an essential role in viral attachment to target host cell, by binding to the cell receptor PCDH10. Some specific strains may also bind host receptors VLDLR and LRP8/APOER2. Synthesized as a pE2 precursor which is processed by furin at the cell membrane just before virion budding, giving rise to E2-E1 heterodimer. The pE2-E1 heterodimer is stable, whereas E2-E1 is unstable and dissociate at low pH. pE2 is processed at the last step, presumably to avoid E1 fusion activation before its final export to cell surface. E2 C-terminus contains a transitory transmembrane that would be disrupted by palmitoylation, resulting in reorientation of the C-terminal tail from lumenal to cytoplasmic side. This step is critical since E2 C-terminus is involved in budding by interacting with capsid proteins. This release of E2 C-terminus in cytoplasm occurs lately in protein export, and precludes premature assembly of particles at the endoplasmic reticulum membrane. Protein 6K: Acts as a viroporin that participates in virus glycoprotein processing and transport to the plasma membrane, cell permeabilization and budding of viral particles. Disrupts the calcium homeostasis of the cell, probably at the endoplasmic reticulum level resulting in the increased levels of cytoplasmic calcium. Because of its lipophilic properties, the 6K protein is postulated to influence the selection of lipids that interact with the transmembrane domains of the glycoproteins, which, in turn, affects the deformability of the bilayer required for the extreme curvature that occurs as budding proceeds. Present in low amount in virions, about 3% compared to viral glycoproteins. Its function is as follows. Class II viral fusion protein. Fusion activity is inactive as long as E1 is bound to E2 in mature virion. After virus attachment to target cell receptor PCDH10 and endocytosis, acidification of the endosome induce dissociation of E1/E2 heterodimer and concomitant trimerization of the E1 subunits. This E1 trimer is fusion active, and promotes release of viral nucleocapsid in cytoplasm after endosome and viral membrane fusion. Efficient fusion requires the presence of cholesterol and sphingolipid in the target membrane. The polypeptide is Structural polyprotein (Western equine encephalitis virus (WEEV)).